A 562-amino-acid chain; its full sequence is Beta-hexosaminidase (562 aa).

The N-terminal stretch at 1-22 (MVLDKMIIFHLLLWLCNVVVHA) is a signal peptide. 7 N-linked (GlcNAc...) asparagine glycosylation sites follow: Asn-38, Asn-52, Asn-111, Asn-337, Asn-382, Asn-396, and Asn-463.

Belongs to the glycosyl hydrolase 20 family.

It catalyses the reaction Hydrolysis of terminal non-reducing N-acetyl-D-hexosamine residues in N-acetyl-beta-D-hexosaminides.. Has a broad substrate specificity. The polypeptide is Beta-hexosaminidase (HEX1) (Candida albicans (Yeast)).